A 254-amino-acid polypeptide reads, in one-letter code: Pectate lyase E (254 aa).

Residues 1–17 (MYQPLLLLPLLLTSAFA) form the signal peptide. The segment at 227 to 254 (TNNNSKEPKKKSSGPSSYCKYSEPLSKC) is disordered. An N-linked (GlcNAc...) asparagine glycan is attached at Asn229. Over residues 239 to 254 (SGPSSYCKYSEPLSKC) the composition is skewed to low complexity.

Belongs to the polysaccharide lyase 3 family. Ca(2+) is required as a cofactor.

The protein localises to the secreted. It carries out the reaction Eliminative cleavage of (1-&gt;4)-alpha-D-galacturonan to give oligosaccharides with 4-deoxy-alpha-D-galact-4-enuronosyl groups at their non-reducing ends.. Functionally, pectinolytic enzyme consist of four classes of enzymes: pectin lyase, polygalacturonase, pectin methylesterase and rhamnogalacturonase. Among pectinolytic enzymes, pectin lyase is the most important in depolymerization of pectin, since it cleaves internal glycosidic bonds of highly methylated pectins. Favors pectate, the anion, over pectin, the methyl ester. The protein is Pectate lyase E (plyE) of Emericella nidulans (strain FGSC A4 / ATCC 38163 / CBS 112.46 / NRRL 194 / M139) (Aspergillus nidulans).